Here is a 443-residue protein sequence, read N- to C-terminus: Xaa-Pro dipeptidase (443 aa).

Positions 246, 257, 339, 384, and 423 each coordinate Mn(2+).

The protein belongs to the peptidase M24B family. Bacterial-type prolidase subfamily. Mn(2+) serves as cofactor.

The catalysed reaction is Xaa-L-Pro dipeptide + H2O = an L-alpha-amino acid + L-proline. Functionally, splits dipeptides with a prolyl residue in the C-terminal position. This is Xaa-Pro dipeptidase from Salmonella paratyphi B (strain ATCC BAA-1250 / SPB7).